We begin with the raw amino-acid sequence, 432 residues long: Probable exopolygalacturonase X (432 aa).

The N-terminal stretch at 1-23 (MKFSYSFVQVVTLLLSLSPSVEG) is a signal peptide. N-linked (GlcNAc...) asparagine glycans are attached at residues asparagine 113, asparagine 129, and asparagine 199. One copy of the PbH1 1 repeat lies at 231 to 252 (SDNIVIQNSVINNGDDCVSFKP). Aspartate 245 functions as the Proton donor in the catalytic mechanism. An intrachain disulfide couples cysteine 247 to cysteine 264. Asparagine 253 and asparagine 265 each carry an N-linked (GlcNAc...) asparagine glycan. PbH1 repeat units follow at residues 254 to 274 (STNILVQNLHCNGSHGISVGS), 285 to 306 (VQNVLVYNISMYNASDGARIKV), and 327 to 348 (VKNVTYNQMYIENVDWAIEVTQ). Residue histidine 268 is part of the active site. N-linked (GlcNAc...) asparagine glycosylation is found at asparagine 292, asparagine 297, asparagine 329, asparagine 354, and asparagine 364. One copy of the PbH1 5 repeat lies at 362–394 (PSNLTISDIHFKNFRGTTSGKRDPNVGTIVCSS). The cysteines at positions 392 and 398 are disulfide-linked.

This sequence belongs to the glycosyl hydrolase 28 family.

The protein resides in the secreted. It carries out the reaction [(1-&gt;4)-alpha-D-galacturonosyl](n) + H2O = alpha-D-galacturonate + [(1-&gt;4)-alpha-D-galacturonosyl](n-1). Specific in hydrolyzing the terminal glycosidic bond of polygalacturonic acid and oligogalacturonates. This is Probable exopolygalacturonase X (pgaX) from Aspergillus fumigatus (strain CBS 144.89 / FGSC A1163 / CEA10) (Neosartorya fumigata).